Here is a 442-residue protein sequence, read N- to C-terminus: Meiotically up-regulated gene 191 protein (442 aa).

Position 361 is a phosphothreonine (T361). Residues 416–429 (RNNPSSGESTTLPQ) are compositionally biased toward polar residues. Residues 416 to 442 (RNNPSSGESTTLPQPSHGKKDKDCVIS) form a disordered region. Residues 433–442 (GKKDKDCVIS) show a composition bias toward basic and acidic residues.

The protein resides in the cytoplasm. The protein localises to the nucleus. Its function is as follows. Has a role in meiosis. This Schizosaccharomyces pombe (strain 972 / ATCC 24843) (Fission yeast) protein is Meiotically up-regulated gene 191 protein (mug191).